Here is a 1253-residue protein sequence, read N- to C-terminus: Cytoplasmic FMR1-interacting protein 1 (1253 aa).

Ser-583 is subject to Phosphoserine. The segment at 724–732 (DKRLRSECK) is EIF4E-binding. At Thr-1234 the chain carries Phosphothreonine.

This sequence belongs to the CYFIP family. As to quaternary structure, component of the WAVE1 complex composed of ABI2, CYFIP1 or CYFIP2, BRK1, NCKAP1 and WASF1/WAVE1. Within the complex, a heterodimer containing NCKAP1 and CYFIP1 interacts with a heterotrimer formed by WAVE1, ABI2 and BRK1. Component of the CYFIP1-EIF4E-FMR1 complex which is composed of CYFIP, EIF4E and FMR1. Interacts with FMR1 but does not bind to related proteins FXR1 or FXR2. Interaction with EIF4E stimulates FMR1 binding. Component of the WAVE2 complex composed of ABI1, CYFIP1/SRA1, NCKAP1/NAP1 (NCKAP1L/HEM1 in hematopoietic cells) and WASF2/WAVE2. Interacts with the active GTP-bound form of RAC1. Interacts through its C-terminus with the C-terminus of DPYSL2/CRMP2 which is necessary for DPYSL2-induced axon outgrowth. Interacts with NYAP1, NYAP2 and MYO16. Interacts with TMEM108 (via N-terminus); the interaction associates TMEM108 with the WAVE1 complex. As to expression, highly expressed in embryonic and adult developing nervous system.

It localises to the cytoplasm. It is found in the perinuclear region. The protein localises to the cell projection. Its subcellular location is the lamellipodium. The protein resides in the ruffle. It localises to the synapse. It is found in the synaptosome. Component of the CYFIP1-EIF4E-FMR1 complex which binds to the mRNA cap and mediates translational repression. In the CYFIP1-EIF4E-FMR1 complex this subunit is an adapter between EIF4E and FMR1. Promotes the translation repression activity of FMR1 in brain probably by mediating its association with EIF4E and mRNA. Regulates formation of membrane ruffles and lamellipodia. Plays a role in axon outgrowth. Binds to F-actin but not to RNA. Part of the WAVE complex that regulates actin filament reorganization via its interaction with the Arp2/3 complex. Actin remodeling activity is regulated by RAC1. Regulator of epithelial morphogenesis. May act as an invasion suppressor in cancers. As component of the WAVE1 complex, required for BDNF-NTRK2 endocytic trafficking and signaling from early endosomes. The chain is Cytoplasmic FMR1-interacting protein 1 from Mus musculus (Mouse).